We begin with the raw amino-acid sequence, 1704 residues long: Type-2 histone deacetylase 2 (1704 aa).

Disordered regions lie at residues 1 to 303 (MSTN…SEER), 315 to 383 (TQGS…TSKK), and 540 to 634 (QFLQ…IGNS). Low complexity predominate over residues 15–69 (TTITNESNTDNNNNNNDDNKNNTENTTSPTNNNNTNDNDNNSDNNNNKNNNNNNS). The segment covering 70-81 (QVTEEQQVTLED) has biased composition (polar residues). Residues 97–113 (DSAEEDEDEMEDDDEDA) show a composition bias toward acidic residues. A compositionally biased stretch (polar residues) spans 134–153 (KVQQSTNTHLSQTTPESPTI). The span at 165–176 (STSTNNTPNTQS) shows a compositional bias: low complexity. The segment covering 186 to 195 (LTSDEEKDLM) has biased composition (basic and acidic residues). Over residues 196–210 (LSEESDGGVGEDDDS) the composition is skewed to acidic residues. The segment covering 222-286 (NQSNQNQNNN…SNNDNNNNNN (65 aa)) has biased composition (low complexity). Residues 315–325 (TQGSSTTTSDP) are compositionally biased toward polar residues. Residues 326 to 351 (NNQNNQINQINQNNQNNQNNQNNQNN) are compositionally biased toward low complexity. Over residues 354-369 (GEEEFGEEFEEEEEDM) the composition is skewed to acidic residues. Residues 372–382 (PKKKTKYKTSK) are compositionally biased toward basic residues. Low complexity-rich tracts occupy residues 540-549 (QFLQQQQQQQ) and 561-580 (NSNN…NNNS). Residues 608-620 (YETRKYTKKRNDE) are compositionally biased toward basic and acidic residues. D1165 and G1227 together coordinate substrate. A divalent metal cation-binding residues include D1256, H1258, and D1350. Residues 1485–1704 (QLERQKQLQQ…TPQNINNSDN (220 aa)) form a disordered region. Residues 1491–1616 (QLQQQQQQAQ…NNSNNNNNMN (126 aa)) are compositionally biased toward low complexity. The segment covering 1649-1669 (LSPNSVNRGNNPSNISMSGAQ) has biased composition (polar residues). Low complexity predominate over residues 1677–1698 (SPKPSNSPNSPSTSNNNGTPQN).

It belongs to the histone deacetylase family. HD type 2 subfamily.

The protein resides in the nucleus. It localises to the cytoplasm. The enzyme catalyses N(6)-acetyl-L-lysyl-[histone] + H2O = L-lysyl-[histone] + acetate. Functionally, responsible for the deacetylation of lysine residues on the N-terminal part of the core histones (H2A, H2B, H3 and H4). Histone deacetylation plays an important role in transcriptional regulation, cell cycle progression and developmental events. Histone deacetylases act via the formation of large multiprotein complexes. The sequence is that of Type-2 histone deacetylase 2 (hdaC) from Dictyostelium discoideum (Social amoeba).